Consider the following 483-residue polypeptide: Myocilin (483 aa).

The N-terminal stretch at 1 to 18 (MPTAQLLLLACLLWGLEA) is a signal peptide. N-linked (GlcNAc...) asparagine glycosylation occurs at N43. Residues 51-162 (GQAMSAIQDL…SQEVARLRRG (112 aa)) adopt a coiled-coil conformation. Positions 153 to 179 (SQEVARLRRGQCPQAHSSSQDVPAGSR) are disordered. The region spanning 223–482 (GCGELVWVGE…MVTYDIRLSK (260 aa)) is the Olfactomedin-like domain. C224 and C412 are joined by a disulfide. Residues D359, N407, A408, I456, and D457 each coordinate Ca(2+). Positions 481-483 (SKM) match the Microbody targeting signal motif.

In terms of assembly, homodimer (via N-terminus). Can also form higher oligomers. Interacts with OLFM3, FN1, NRCAM, GLDN and NFASC. Interacts (via N-terminus) with MYL2. Interacts with SFRP1, FRZB, FZD7, FZD10, FZD1 and WIF1; regulates Wnt signaling. Interacts with SNTA1; regulates muscle hypertrophy. Interacts with ERBB2 and ERBB3; activates ERBB2-ERBB3 signaling pathway. Interacts with SNCG; affects its secretion and its aggregation. N-glycosylated. Post-translationally, palmitoylated. In terms of processing, undergoes a calcium-dependent proteolytic cleavage at Arg-205 by CAPN2 in the endoplasmic reticulum. The result is the production of two fragments, one of 35 kDa containing the C-terminal olfactomedin-like domain, and another of 20 kDa containing the N-terminal leucine zipper-like domain. As to expression, expressed in optic nerve head, ciliary body and retina.

It localises to the secreted. Its subcellular location is the golgi apparatus. It is found in the cytoplasmic vesicle. The protein resides in the extracellular space. The protein localises to the extracellular matrix. It localises to the extracellular exosome. Its subcellular location is the mitochondrion. It is found in the mitochondrion intermembrane space. The protein resides in the mitochondrion inner membrane. The protein localises to the mitochondrion outer membrane. It localises to the rough endoplasmic reticulum. Its subcellular location is the cell projection. It is found in the cilium. The protein resides in the endoplasmic reticulum. In terms of biological role, secreted glycoprotein regulating the activation of different signaling pathways in adjacent cells to control different processes including cell adhesion, cell-matrix adhesion, cytoskeleton organization and cell migration. Promotes substrate adhesion, spreading and formation of focal contacts. Negatively regulates cell-matrix adhesion and stress fiber assembly through Rho protein signal transduction. Modulates the organization of actin cytoskeleton by stimulating the formation of stress fibers through interactions with components of Wnt signaling pathways. Promotes cell migration through activation of PTK2 and the downstream phosphatidylinositol 3-kinase signaling. Plays a role in bone formation and promotes osteoblast differentiation in a dose-dependent manner through mitogen-activated protein kinase signaling. Mediates myelination in the peripheral nervous system through ERBB2/ERBB3 signaling. Plays a role as a regulator of muscle hypertrophy through the components of dystrophin-associated protein complex. Involved in positive regulation of mitochondrial depolarization. Plays a role in neurite outgrowth. May participate in the obstruction of fluid outflow in the trabecular meshwork. This is Myocilin (MYOC) from Canis lupus familiaris (Dog).